The following is a 341-amino-acid chain: Dual oxidase maturation factor 1 (341 aa).

The Extracellular portion of the chain corresponds to 1–24 (MAALGHTLPFYTGTKPTFPMDTTL). A helical membrane pass occupies residues 25–45 (AVIITIFLTALVTFIIILPGI). Residues 46–51 (RGKTRL) are Cytoplasmic-facing. The chain crosses the membrane as a helical span at residues 52 to 72 (FWLLRVVTSLFIGAVILAVNF). Residues 73-183 (SSEWSVGHVN…RLAGHYASAM (111 aa)) are Extracellular-facing. Residues Asn84, Asn109, and Asn121 are each glycosylated (N-linked (GlcNAc...) asparagine). The chain crosses the membrane as a helical span at residues 184 to 204 (LWVAFLCWLLANVMLSMPVLV). Tyr205 is a topological domain (cytoplasmic). Residues 206 to 226 (GGHMLLATGLFQLLALFFFSM) traverse the membrane as a helical segment. At 227–249 (TTSLISPCPLRLGTAVLHTHHGP) the chain is on the extracellular side. Residues 250–270 (AFWITLATGLLCILLGLVMAV) form a helical membrane-spanning segment. The Cytoplasmic portion of the chain corresponds to 271–341 (AHRMQPHRLK…EHPKESDCSL (71 aa)).

It belongs to the DUOXA family. As to quaternary structure, may interact with NUMB.

The protein localises to the membrane. In terms of biological role, may be required for the maturation and the transport from the endoplasmic reticulum to the plasma membrane of functional DUOX1. In Mus musculus (Mouse), this protein is Dual oxidase maturation factor 1 (Duoxa1).